The primary structure comprises 158 residues: Rhombotin-2 (158 aa).

LIM zinc-binding domains are found at residues 30–89 and 94–153; these read CGGC…RLFG and CASC…EWTK.

Interacts via its LIM domains with ELF2 and LDB1. Also interacts with basic helix-loop-helix protein TAL1/SCL and can assemble in a complex with LMO2 and TAL1/SCL. Interacts with BEX2 and KDM5A.

It localises to the nucleus. Acts with TAL1/SCL to regulate red blood cell development. Also acts with LDB1 to maintain erythroid precursors in an immature state. The chain is Rhombotin-2 (LMO2) from Homo sapiens (Human).